We begin with the raw amino-acid sequence, 400 residues long: Imidazolonepropionase (400 aa).

Fe(3+) contacts are provided by H70 and H72. H70 and H72 together coordinate Zn(2+). Residues R79, Y142, and H175 each coordinate 4-imidazolone-5-propanoate. Residue Y142 coordinates N-formimidoyl-L-glutamate. H239 serves as a coordination point for Fe(3+). Residue H239 participates in Zn(2+) binding. Q242 lines the 4-imidazolone-5-propanoate pocket. D314 contributes to the Fe(3+) binding site. D314 is a Zn(2+) binding site. The N-formimidoyl-L-glutamate site is built by N316 and G318. T319 provides a ligand contact to 4-imidazolone-5-propanoate.

Belongs to the metallo-dependent hydrolases superfamily. HutI family. The cofactor is Zn(2+). Requires Fe(3+) as cofactor.

The protein resides in the cytoplasm. The catalysed reaction is 4-imidazolone-5-propanoate + H2O = N-formimidoyl-L-glutamate. Its pathway is amino-acid degradation; L-histidine degradation into L-glutamate; N-formimidoyl-L-glutamate from L-histidine: step 3/3. Its function is as follows. Catalyzes the hydrolytic cleavage of the carbon-nitrogen bond in imidazolone-5-propanoate to yield N-formimidoyl-L-glutamate. It is the third step in the universal histidine degradation pathway. The protein is Imidazolonepropionase of Methylobacterium sp. (strain 4-46).